Reading from the N-terminus, the 299-residue chain is Porphobilinogen deaminase (299 aa).

The residue at position 242 (cysteine 242) is an S-(dipyrrolylmethanemethyl)cysteine.

It belongs to the HMBS family. In terms of assembly, monomer. Dipyrromethane is required as a cofactor.

The catalysed reaction is 4 porphobilinogen + H2O = hydroxymethylbilane + 4 NH4(+). It functions in the pathway porphyrin-containing compound metabolism; protoporphyrin-IX biosynthesis; coproporphyrinogen-III from 5-aminolevulinate: step 2/4. Functionally, tetrapolymerization of the monopyrrole PBG into the hydroxymethylbilane pre-uroporphyrinogen in several discrete steps. The polypeptide is Porphobilinogen deaminase (Rickettsia typhi (strain ATCC VR-144 / Wilmington)).